Reading from the N-terminus, the 327-residue chain is MEKQLAELSVYILIIFLILGFIMAILMRFGDDTTLFDLTQLPKNNPKKLNYYVQPAKNPNENVPFKTIFDKPQVYVSFIVPAYNEEKRLPKMLEETIEYLEQRRYKDNNFTWEIVVVNDGSKDRTAHVVLEYAERYSNIFLLNQPHNMGKGAAIQAGCLHARGQLVLMVDADGATKISDFGLLENEIKKLMKNNKEAIVVGSRTLNEDKSKVHRTFIRKILGLGMHILIVISGVHGIKDTQCGFKLFTRDACKMLFMNQHVQRWCFDPELLVIARRRKMKVSEISVEWNEIEGSKMKISGMIKMAIDLLRIAVFYRLNIWTIRDRKF.

At 1–6 the chain is on the lumenal side; sequence MEKQLA. The chain crosses the membrane as a helical span at residues 7-27; that stretch reads ELSVYILIIFLILGFIMAILM. Residues 28–327 are Cytoplasmic-facing; it reads RFGDDTTLFD…NIWTIRDRKF (300 aa).

The protein belongs to the glycosyltransferase 2 family.

Its subcellular location is the endoplasmic reticulum membrane. It catalyses the reaction a di-trans,poly-cis-dolichyl phosphate + UDP-alpha-D-glucose = a di-trans,poly-cis-dolichyl beta-D-glucosyl phosphate + UDP. It participates in protein modification; protein glycosylation. Its function is as follows. Dolichyl-phosphate beta-glucosyltransferase involved in the glycosylation of glycoproteins through the synthesis of dolichyl beta-D-glucosyl phosphate which serves as a sugar donor for transfer of three glucose residues to the Man-9-GlcNAc-2-PP-dolichol precursor to N-glycans. The protein is Dolichyl-phosphate beta-glucosyltransferase ALG5D of Trichomonas vaginalis (strain ATCC PRA-98 / G3).